A 426-amino-acid chain; its full sequence is UDP-N-acetylglucosamine--N-acetylmuramyl-(pentapeptide) pyrophosphoryl-undecaprenol N-acetylglucosamine transferase (426 aa).

Residues 28-30 (TGG), N140, R176, S204, I257, and Q302 contribute to the UDP-N-acetyl-alpha-D-glucosamine site. Positions 369 to 388 (AGNGPSGMGNGHSSEQPQER) are disordered.

This sequence belongs to the glycosyltransferase 28 family. MurG subfamily.

The protein localises to the cell inner membrane. It carries out the reaction di-trans,octa-cis-undecaprenyl diphospho-N-acetyl-alpha-D-muramoyl-L-alanyl-D-glutamyl-meso-2,6-diaminopimeloyl-D-alanyl-D-alanine + UDP-N-acetyl-alpha-D-glucosamine = di-trans,octa-cis-undecaprenyl diphospho-[N-acetyl-alpha-D-glucosaminyl-(1-&gt;4)]-N-acetyl-alpha-D-muramoyl-L-alanyl-D-glutamyl-meso-2,6-diaminopimeloyl-D-alanyl-D-alanine + UDP + H(+). It functions in the pathway cell wall biogenesis; peptidoglycan biosynthesis. Cell wall formation. Catalyzes the transfer of a GlcNAc subunit on undecaprenyl-pyrophosphoryl-MurNAc-pentapeptide (lipid intermediate I) to form undecaprenyl-pyrophosphoryl-MurNAc-(pentapeptide)GlcNAc (lipid intermediate II). In Xanthomonas axonopodis pv. citri (strain 306), this protein is UDP-N-acetylglucosamine--N-acetylmuramyl-(pentapeptide) pyrophosphoryl-undecaprenol N-acetylglucosamine transferase.